A 218-amino-acid chain; its full sequence is Adenylate kinase (218 aa).

Residue 10-15 coordinates ATP; sequence GAGKGT. Positions 30–59 are NMP; it reads STGDMLRAAVKAGTPLGIAAKKIMDEGGLV. Residues T31, R36, 57–59, 85–88, and Q92 each bind AMP; these read GLV and GFPR. The LID stretch occupies residues 122 to 159; it reads GRRVHPASGRTYHVKFNPPKVAGKDDLTGEELIQRDDD. ATP contacts are provided by residues R123 and 132–133; that span reads TY. 2 residues coordinate AMP: R156 and R167. Position 203 (G203) interacts with ATP.

The protein belongs to the adenylate kinase family. As to quaternary structure, monomer.

It is found in the cytoplasm. The enzyme catalyses AMP + ATP = 2 ADP. Its pathway is purine metabolism; AMP biosynthesis via salvage pathway; AMP from ADP: step 1/1. Catalyzes the reversible transfer of the terminal phosphate group between ATP and AMP. Plays an important role in cellular energy homeostasis and in adenine nucleotide metabolism. The protein is Adenylate kinase of Janthinobacterium sp. (strain Marseille) (Minibacterium massiliensis).